The chain runs to 270 residues: Phospholysine phosphohistidine inorganic pyrophosphate phosphatase (270 aa).

Asp-17 and Ser-19 together coordinate Mg(2+). Residues 17–19 (DIS), 54–55 (TN), and Lys-189 contribute to the substrate site. Asp-214 is a binding site for Mg(2+).

Belongs to the HAD-like hydrolase superfamily. Homodimer. Mg(2+) serves as cofactor.

The protein resides in the cytoplasm. Its subcellular location is the nucleus. The enzyme catalyses diphosphate + H2O = 2 phosphate + H(+). In terms of biological role, phosphatase that hydrolyzes imidodiphosphate, 3-phosphohistidine and 6-phospholysine. Has broad substrate specificity and can also hydrolyze inorganic diphosphate, but with lower efficiency. In Mus musculus (Mouse), this protein is Phospholysine phosphohistidine inorganic pyrophosphate phosphatase (Lhpp).